We begin with the raw amino-acid sequence, 327 residues long: ATP-dependent 6-phosphofructokinase (327 aa).

ATP is bound by residues G12, 73-74 (RL), and 103-106 (GDGS). Residue D104 participates in Mg(2+) binding. 126–128 (TID) is a substrate binding site. D128 acts as the Proton acceptor in catalysis. R155 lines the ADP pocket. Substrate is bound by residues R163 and 170 to 172 (MGH). ADP is bound by residues 186–188 (GAD) and 214–216 (KRS). Substrate-binding positions include E223, R245, and 251-254 (HTQR).

It belongs to the phosphofructokinase type A (PFKA) family. ATP-dependent PFK group I subfamily. Prokaryotic clade 'B1' sub-subfamily. As to quaternary structure, homotetramer. Mg(2+) is required as a cofactor.

Its subcellular location is the cytoplasm. The enzyme catalyses beta-D-fructose 6-phosphate + ATP = beta-D-fructose 1,6-bisphosphate + ADP + H(+). The protein operates within carbohydrate degradation; glycolysis; D-glyceraldehyde 3-phosphate and glycerone phosphate from D-glucose: step 3/4. With respect to regulation, allosterically activated by ADP and other diphosphonucleosides, and allosterically inhibited by phosphoenolpyruvate. Its function is as follows. Catalyzes the phosphorylation of D-fructose 6-phosphate to fructose 1,6-bisphosphate by ATP, the first committing step of glycolysis. The chain is ATP-dependent 6-phosphofructokinase from Spiroplasma citri.